The sequence spans 97 residues: Protein Vpr (97 aa).

A homooligomerization region spans residues 1-42; sequence MEQAPEDQGPQREPYNEWTLELLEELKREAVRHFPRPWLHSL. 3 positions are modified to phosphoserine; by host: serine 79, serine 95, and serine 97.

This sequence belongs to the HIV-1 VPR protein family. In terms of assembly, homooligomer, may form homodimer. Interacts with p6-gag region of the Pr55 Gag precursor protein through a (Leu-X-X)4 motif near the C-terminus of the P6gag protein. Interacts with host UNG. May interact with host RAD23A/HHR23A. Interacts with host VPRBP/DCAF1, leading to hijack the CUL4A-RBX1-DDB1-DCAF1/VPRBP complex, mediating ubiquitination of host proteins such as TERT and ZGPAT and arrest of the cell cycle in G2 phase. Phosphorylated on several residues by host. These phosphorylations regulate VPR activity for the nuclear import of the HIV-1 pre-integration complex.

It localises to the virion. The protein localises to the host nucleus. The protein resides in the host extracellular space. Functionally, during virus replication, may deplete host UNG protein, and incude G2-M cell cycle arrest. Acts by targeting specific host proteins for degradation by the 26S proteasome, through association with the cellular CUL4A-DDB1 E3 ligase complex by direct interaction with host VPRPB/DCAF-1. Cell cycle arrest reportedly occurs within hours of infection and is not blocked by antiviral agents, suggesting that it is initiated by the VPR carried into the virion. Additionally, VPR induces apoptosis in a cell cycle dependent manner suggesting that these two effects are mechanistically linked. Detected in the serum and cerebrospinal fluid of AIDS patient, VPR may also induce cell death to bystander cells. During virus entry, plays a role in the transport of the viral pre-integration (PIC) complex to the host nucleus. This function is crucial for viral infection of non-dividing macrophages. May act directly at the nuclear pore complex, by binding nucleoporins phenylalanine-glycine (FG)-repeat regions. This chain is Protein Vpr, found in Human immunodeficiency virus type 1 group M subtype B (isolate ARV2/SF2) (HIV-1).